Reading from the N-terminus, the 835-residue chain is Microcephalin (835 aa).

Positions 1 to 93 (MAAPILKDVV…AHIDESLFPA (93 aa)) constitute a BRCT 1 domain. The disordered stretch occupies residues 184-206 (KEKRENLSPTSSQLIQQSHDNPS). The span at 190–206 (LSPTSSQLIQQSHDNPS) shows a compositional bias: polar residues. Residues serine 279, serine 287, serine 296, and serine 333 each carry the phosphoserine modification. Threonine 335 is subject to Phosphothreonine. Positions 346–361 (HSRPRSSSVKRKRVSH) are enriched in basic residues. 2 disordered regions span residues 346-376 (HSRP…RKRS) and 418-442 (PDNL…PAQF). Serine 548 is modified (phosphoserine). Positions 557–582 (GLKSTQNRGTTSKISNSSEGEAQSEH) are disordered. A compositionally biased stretch (polar residues) spans 559-577 (KSTQNRGTTSKISNSSEGE). 2 BRCT domains span residues 640–730 (SGRG…PFEL) and 751–833 (YRGT…NYLL).

Interacts with CDC27 and maybe other components of the APC/C complex. Interacts with histone variant H2AX under DNA damage conditions.

Its subcellular location is the cytoplasm. It is found in the cytoskeleton. The protein resides in the microtubule organizing center. The protein localises to the centrosome. In terms of biological role, implicated in chromosome condensation and DNA damage induced cellular responses. May play a role in neurogenesis and regulation of the size of the cerebral cortex. This chain is Microcephalin, found in Gorilla gorilla gorilla (Western lowland gorilla).